A 115-amino-acid polypeptide reads, in one-letter code: Large ribosomal subunit protein eL30 (115 aa).

It belongs to the eukaryotic ribosomal protein eL30 family. Component of the large ribosomal subunit.

It localises to the cytoplasm. In terms of biological role, component of the large ribosomal subunit. The ribosome is a large ribonucleoprotein complex responsible for the synthesis of proteins in the cell. The polypeptide is Large ribosomal subunit protein eL30 (RPL30) (Gallus gallus (Chicken)).